We begin with the raw amino-acid sequence, 186 residues long: Meiotically up-regulated gene 163 protein (186 aa).

Its subcellular location is the mitochondrion. Functionally, has a role in meiosis. This chain is Meiotically up-regulated gene 163 protein (mug163), found in Schizosaccharomyces pombe (strain 972 / ATCC 24843) (Fission yeast).